The following is a 530-amino-acid chain: Cation channel sperm-associated protein 2 (530 aa).

Over Met1–Pro108 the chain is Cytoplasmic. A helical membrane pass occupies residues Leu109–Leu131. Residues Leu132–Trp140 lie on the Extracellular side of the membrane. Residues Pro141 to Leu166 traverse the membrane as a helical segment. Residues Ser167 to Ser175 lie on the Cytoplasmic side of the membrane. Residues Ala176–Thr200 traverse the membrane as a helical segment. The Extracellular segment spans residues Gly201 to Ser203. Residues Val204–Ala222 form a helical membrane-spanning segment. Topologically, residues Gln223–Lys239 are cytoplasmic. Residues Ser240 to Val262 traverse the membrane as a helical segment. At Phe263 to Ser281 the chain is on the extracellular side. The helical; Pore-forming intramembrane region spans Asp282–Phe294. At Thr295–Arg314 the chain is on the extracellular side. The chain crosses the membrane as a helical span at residues Ile315 to Val341. Residues Thr342–Lys530 are Cytoplasmic-facing. A disordered region spans residues Met378 to Glu458. Residues Lys429–Tyr440 are compositionally biased toward basic and acidic residues. The span at Ser442–Glu458 shows a compositional bias: low complexity.

Belongs to the cation channel sperm-associated (TC 1.A.1.19) family. As to quaternary structure, component of the CatSper complex or CatSpermasome composed of the core pore-forming members CATSPER1, CATSPER2, CATSPER3 and CATSPER4 as well as auxiliary members CATSPERB, CATSPERG, CATSPERD, CATSPERE, CATSPERZ, C2CD6/CATSPERT, TMEM249, TMEM262 and EFCAB9. HSPA1 may be an additional auxiliary complex member. The core complex members CATSPER1, CATSPER2, CATSPER3 and CATSPER4 form a heterotetrameric channel. The auxiliary CATSPERB, CATSPERG, CATSPERD and CATSPERE subunits form a pavilion-like structure over the pore which stabilizes the complex through interactions with CATSPER4, CATSPER3, CATSPER1 and CATSPER2 respectively. TMEM262/CATSPERH interacts with CATSPERB, further stabilizing the complex. C2CD6/CATSPERT interacts at least with CATSPERD and is required for targeting the CatSper complex in the flagellar membrane. Interacts with Ca(v)3.3/CACNA1I, leading to suppression of T-type calcium channel activity. In terms of tissue distribution, testis-specific.

It localises to the cell projection. The protein localises to the cilium. It is found in the flagellum membrane. It catalyses the reaction Ca(2+)(in) = Ca(2+)(out). With respect to regulation, the CatSper calcium channel is indirectly activated by extracellular progesterone and prostaglandins following the sequence: progesterone &gt; PGF1-alpha = PGE1 &gt; PGA1 &gt; PGE2 &gt;&gt; PGD2. The CatSper calcium channel is directly inhibited by endocannabinoid 2-arachidonoylglycerol (2AG). Indirect activation by progesterone takes place via the following mechanism: progesterone binds and activates the acylglycerol lipase ABHD2, which in turn mediates hydrolysis of 2AG inhibitor, relieving inhibition of the CatSper channel. The primary effect of progesterone activation is to shift voltage dependence towards more physiological, negative membrane potentials; it is not mediated by metabotropic receptors and second messengers. Sperm capacitation enhances the effect of progesterone by providing additional negative shift. Also activated by the elevation of intracellular pH. Its function is as follows. Pore-forming subunit of the CatSper complex, a sperm-specific voltage-gated calcium channel, that plays a central role in calcium-dependent physiological responses essential for successful fertilization, such as sperm hyperactivation, acrosome reaction and chemotaxis towards the oocyte. This is Cation channel sperm-associated protein 2 (CATSPER2) from Homo sapiens (Human).